The following is a 215-amino-acid chain: Protein-methionine-sulfoxide reductase heme-binding subunit MsrQ (215 aa).

6 consecutive transmembrane segments (helical) span residues 17–37 (AAIWSLYVIGLCPGLWYFYLA), 50–70 (FEHLLGIWALRFLCLGLLVTP), 85–105 (ALGLIAFYYVLAHFTVYLVLD), 121–141 (PYIMLGMAGLIILIPLALTSN), 152–172 (WNTLHKLVYLVLIVGVLHFVL), and 177–197 (ITLEPVFYISTMVVLLGYRLV).

The protein belongs to the MsrQ family. In terms of assembly, heterodimer of a catalytic subunit (MsrP) and a heme-binding subunit (MsrQ). FMN is required as a cofactor. Heme b serves as cofactor.

It is found in the cell inner membrane. In terms of biological role, part of the MsrPQ system that repairs oxidized periplasmic proteins containing methionine sulfoxide residues (Met-O), using respiratory chain electrons. Thus protects these proteins from oxidative-stress damage caused by reactive species of oxygen and chlorine generated by the host defense mechanisms. MsrPQ is essential for the maintenance of envelope integrity under bleach stress, rescuing a wide series of structurally unrelated periplasmic proteins from methionine oxidation. MsrQ provides electrons for reduction to the reductase catalytic subunit MsrP, using the quinone pool of the respiratory chain. This is Protein-methionine-sulfoxide reductase heme-binding subunit MsrQ from Agrobacterium fabrum (strain C58 / ATCC 33970) (Agrobacterium tumefaciens (strain C58)).